The chain runs to 98 residues: Integration host factor subunit beta (98 aa).

It belongs to the bacterial histone-like protein family. Heterodimer of an alpha and a beta chain.

Functionally, this protein is one of the two subunits of integration host factor, a specific DNA-binding protein that functions in genetic recombination as well as in transcriptional and translational control. The chain is Integration host factor subunit beta from Pseudomonas putida (strain W619).